The chain runs to 315 residues: Annexin Gh1 (315 aa).

Annexin repeat units lie at residues 10 to 81 (PSVS…LWAL), 82 to 153 (DPAE…PLVS), 165 to 236 (TLAK…STVK), and 240 to 311 (YPEK…VLAG). Ca(2+)-binding residues include F23, G25, G27, and E67. Ca(2+) contacts are provided by I253, R255, G257, V295, D297, T298, and E303.

Belongs to the annexin family. As to quaternary structure, monomer. Trimer. Oligomerization is calcium-independent. Disassembly of the oligomers seems to be required for calcium-binding.

Its subcellular location is the membrane. Its function is as follows. Binds to phospholipid vesicles in a calcium-dependent manner in vitro. Prefers phosphatidyl-serine containing membranes. May have a role in the membrane cytoskeleton scaffolding or exocytotic processes. May be involved in oxidative stress response. The polypeptide is Annexin Gh1 (Gossypium hirsutum (Upland cotton)).